The sequence spans 171 residues: UPF0398 protein SEQ_1788 (171 aa).

It belongs to the UPF0398 family.

This chain is UPF0398 protein SEQ_1788, found in Streptococcus equi subsp. equi (strain 4047).